The following is a 513-amino-acid chain: ATP synthase subunit alpha (513 aa).

169–176 (GDRQTGKT) serves as a coordination point for ATP.

Belongs to the ATPase alpha/beta chains family. As to quaternary structure, F-type ATPases have 2 components, CF(1) - the catalytic core - and CF(0) - the membrane proton channel. CF(1) has five subunits: alpha(3), beta(3), gamma(1), delta(1), epsilon(1). CF(0) has three main subunits: a(1), b(2) and c(9-12). The alpha and beta chains form an alternating ring which encloses part of the gamma chain. CF(1) is attached to CF(0) by a central stalk formed by the gamma and epsilon chains, while a peripheral stalk is formed by the delta and b chains.

It is found in the cell inner membrane. It carries out the reaction ATP + H2O + 4 H(+)(in) = ADP + phosphate + 5 H(+)(out). Functionally, produces ATP from ADP in the presence of a proton gradient across the membrane. The alpha chain is a regulatory subunit. This is ATP synthase subunit alpha from Ruegeria sp. (strain TM1040) (Silicibacter sp.).